The following is a 261-amino-acid chain: Transmembrane and immunoglobulin domain-containing protein 1 (261 aa).

The signal sequence occupies residues 1-27 (MAQKTSGLIQRCRFLLLMILFLPHVMT). The Ig-like C2-type 1 domain occupies 28 to 114 (SSVLSVNGKT…LQRNQSVSIS (87 aa)). The Extracellular portion of the chain corresponds to 28-219 (SSVLSVNGKT…IVKDKGSTVP (192 aa)). Cys54 and Cys103 form a disulfide bridge. N-linked (GlcNAc...) asparagine glycans are attached at residues Asn83, Asn108, Asn118, and Asn189. The Ig-like C2-type 2 domain occupies 122 to 208 (PPLLSGNDFQ…LIETKTKDFH (87 aa)). A disulfide bridge connects residues Cys143 and Cys194. A helical membrane pass occupies residues 220–240 (IEPIIAACVVVFLTLVFGVIA). At 241 to 261 (RRKRIMKLCRKDQGPQCRTAL) the chain is on the cytoplasmic side.

In terms of assembly, homodimer. In terms of processing, N-glycosylated.

It localises to the cell membrane. It is found in the cytoplasm. Functionally, may control cell-cell adhesion, cell migration and proliferation, cell morphology, and protects renal epithelial cells from oxidative cell injury to promote cell survival. In Bos taurus (Bovine), this protein is Transmembrane and immunoglobulin domain-containing protein 1.